Reading from the N-terminus, the 260-residue chain is Indole-3-glycerol phosphate synthase (260 aa).

This sequence belongs to the TrpC family.

It carries out the reaction 1-(2-carboxyphenylamino)-1-deoxy-D-ribulose 5-phosphate + H(+) = (1S,2R)-1-C-(indol-3-yl)glycerol 3-phosphate + CO2 + H2O. It participates in amino-acid biosynthesis; L-tryptophan biosynthesis; L-tryptophan from chorismate: step 4/5. This Neisseria gonorrhoeae (strain NCCP11945) protein is Indole-3-glycerol phosphate synthase.